The chain runs to 265 residues: Glycosylphosphatidylinositol anchor biosynthesis protein 11 (265 aa).

Helical transmembrane passes span 49-69 (LLVV…SGLT) and 79-99 (GFLT…INLL). N-linked (GlcNAc...) asparagine glycosylation is found at asparagine 111 and asparagine 112. 4 helical membrane passes run 137 to 157 (IFVS…MGAP), 166 to 186 (LYLS…LSNL), 209 to 229 (ILSS…PIPL), and 240 to 260 (ITLL…SLIV).

It belongs to the PIGF family.

It is found in the endoplasmic reticulum membrane. It functions in the pathway glycolipid biosynthesis; glycosylphosphatidylinositol-anchor biosynthesis. In terms of biological role, acts in the GPI biosynthetic pathway between GlcNAc-PI synthesis and GPI transfer to protein. This Candida albicans (strain SC5314 / ATCC MYA-2876) (Yeast) protein is Glycosylphosphatidylinositol anchor biosynthesis protein 11 (GPI11).